The following is a 594-amino-acid chain: NADH-quinone oxidoreductase subunit C/D (594 aa).

The tract at residues 1-185 (MTTGSALYIP…DPFSLNLAKQ (185 aa)) is NADH dehydrogenase I subunit C. Positions 209-594 (DYMFLNLGPN…IDFVMADVDR (386 aa)) are NADH dehydrogenase I subunit D.

In the N-terminal section; belongs to the complex I 30 kDa subunit family. It in the C-terminal section; belongs to the complex I 49 kDa subunit family. As to quaternary structure, NDH-1 is composed of 13 different subunits. Subunits NuoB, CD, E, F, and G constitute the peripheral sector of the complex.

It localises to the cell inner membrane. The catalysed reaction is a quinone + NADH + 5 H(+)(in) = a quinol + NAD(+) + 4 H(+)(out). Its function is as follows. NDH-1 shuttles electrons from NADH, via FMN and iron-sulfur (Fe-S) centers, to quinones in the respiratory chain. The immediate electron acceptor for the enzyme in this species is believed to be ubiquinone. Couples the redox reaction to proton translocation (for every two electrons transferred, four hydrogen ions are translocated across the cytoplasmic membrane), and thus conserves the redox energy in a proton gradient. The sequence is that of NADH-quinone oxidoreductase subunit C/D from Pseudomonas fluorescens (strain SBW25).